The primary structure comprises 653 residues: Fusexin 1 (653 aa).

A signal peptide spans 1–24 (MKRVGNCWKASVAAFFLLMFTAFA). Residues 25-559 (AADTTSVDTV…FENIWSGDAN (535 aa)) lie on the Extracellular side of the membrane. 4 disulfide bridges follow: cysteine 129–cysteine 167, cysteine 398–cysteine 441, cysteine 468–cysteine 487, and cysteine 499–cysteine 516. Positions 155 to 160 (DYWTGS) are fusion loop. A helical transmembrane segment spans residues 560–580 (ALNWLQVFVTFIAFLGGFALV). The Cytoplasmic portion of the chain corresponds to 581-604 (GVKLGKIVDGLATEFIPVKDSHVR). A run of 2 helical transmembrane segments spans residues 605 to 625 (LVIG…LVTD) and 626 to 646 (PLGL…YLSA). The Cytoplasmic portion of the chain corresponds to 647 to 653 (SAPEINL).

Belongs to the HAP2/GCS1 family. Fusexin 1 subfamily. In terms of assembly, homotrimer stabilized by interdomain contacts and numerous Ca(2+) and Na(+) ions.

The protein localises to the cell surface. The protein resides in the cell membrane. Exhibits fusogenic activity. Mediates cell-cell fusion in mammalian cells (bilateral fusion). This is Fusexin 1 from Haloplanus natans (strain DSM 17983 / JCM 14081 / CGMCC 1.8972 / RE-101).